A 130-amino-acid chain; its full sequence is S-adenosylmethionine decarboxylase proenzyme (130 aa).

Serine 64 acts as the Schiff-base intermediate with substrate; via pyruvic acid in catalysis. At serine 64 the chain carries Pyruvic acid (Ser); by autocatalysis. Histidine 69 (proton acceptor; for processing activity) is an active-site residue. Residue cysteine 84 is the Proton donor; for catalytic activity of the active site.

This sequence belongs to the prokaryotic AdoMetDC family. Type 1 subfamily. As to quaternary structure, heterotetramer of two alpha and two beta chains arranged as a dimer of alpha/beta heterodimers. Pyruvate is required as a cofactor. In terms of processing, is synthesized initially as an inactive proenzyme. Formation of the active enzyme involves a self-maturation process in which the active site pyruvoyl group is generated from an internal serine residue via an autocatalytic post-translational modification. Two non-identical subunits are generated from the proenzyme in this reaction, and the pyruvate is formed at the N-terminus of the alpha chain, which is derived from the carboxyl end of the proenzyme. The post-translation cleavage follows an unusual pathway, termed non-hydrolytic serinolysis, in which the side chain hydroxyl group of the serine supplies its oxygen atom to form the C-terminus of the beta chain, while the remainder of the serine residue undergoes an oxidative deamination to produce ammonia and the pyruvoyl group blocking the N-terminus of the alpha chain.

The enzyme catalyses S-adenosyl-L-methionine + H(+) = S-adenosyl 3-(methylsulfanyl)propylamine + CO2. It participates in amine and polyamine biosynthesis; S-adenosylmethioninamine biosynthesis; S-adenosylmethioninamine from S-adenosyl-L-methionine: step 1/1. Catalyzes the decarboxylation of S-adenosylmethionine to S-adenosylmethioninamine (dcAdoMet), the propylamine donor required for the synthesis of the polyamines spermine and spermidine from the diamine putrescine. This Thermoplasma volcanium (strain ATCC 51530 / DSM 4299 / JCM 9571 / NBRC 15438 / GSS1) protein is S-adenosylmethionine decarboxylase proenzyme.